Reading from the N-terminus, the 114-residue chain is Large ribosomal subunit protein bL20c (114 aa).

It belongs to the bacterial ribosomal protein bL20 family.

The protein localises to the plastid. Its subcellular location is the chloroplast. Functionally, binds directly to 23S ribosomal RNA and is necessary for the in vitro assembly process of the 50S ribosomal subunit. It is not involved in the protein synthesizing functions of that subunit. This Trieres chinensis (Marine centric diatom) protein is Large ribosomal subunit protein bL20c (rpl20).